Here is a 204-residue protein sequence, read N- to C-terminus: Ribonuclease HII (204 aa).

The region spanning 1-197 (MILGIDEAGR…KNRILNPKLL (197 aa)) is the RNase H type-2 domain. Positions 6, 7, and 103 each coordinate a divalent metal cation.

The protein belongs to the RNase HII family. It depends on Mn(2+) as a cofactor. Requires Mg(2+) as cofactor.

The protein localises to the cytoplasm. The catalysed reaction is Endonucleolytic cleavage to 5'-phosphomonoester.. Functionally, endonuclease that specifically degrades the RNA of RNA-DNA hybrids. This is Ribonuclease HII from Helicobacter pylori (strain G27).